Here is a 204-residue protein sequence, read N- to C-terminus: UPF0637 protein SAR1080 (204 aa).

This sequence belongs to the UPF0637 family.

This chain is UPF0637 protein SAR1080, found in Staphylococcus aureus (strain MRSA252).